A 226-amino-acid chain; its full sequence is Cytochrome c oxidase subunit 2 (226 aa).

The Mitochondrial intermembrane segment spans residues 1 to 25; sequence MNTWLLSLQNSNSPTYDMMIFFHDF. A helical transmembrane segment spans residues 26 to 47; sequence TMMILIFITLLILFIMFTMINN. Topologically, residues 48–61 are mitochondrial matrix; it reads NLINRFLLQGHFIE. Residues 62 to 81 form a helical membrane-spanning segment; that stretch reads LIWTITPMIILILIAIPSFK. Residues 82–226 are Mitochondrial intermembrane-facing; the sequence is ILYLTDEMFN…YFKNWLKSFL (145 aa). 6 residues coordinate Cu cation: histidine 160, cysteine 195, glutamate 197, cysteine 199, histidine 203, and methionine 206. A Mg(2+)-binding site is contributed by glutamate 197.

It belongs to the cytochrome c oxidase subunit 2 family. In terms of assembly, component of the cytochrome c oxidase (complex IV, CIV), a multisubunit enzyme composed of a catalytic core of 3 subunits and several supernumerary subunits. The complex exists as a monomer or a dimer and forms supercomplexes (SCs) in the inner mitochondrial membrane with ubiquinol-cytochrome c oxidoreductase (cytochrome b-c1 complex, complex III, CIII). Cu cation serves as cofactor.

It is found in the mitochondrion inner membrane. The catalysed reaction is 4 Fe(II)-[cytochrome c] + O2 + 8 H(+)(in) = 4 Fe(III)-[cytochrome c] + 2 H2O + 4 H(+)(out). Its function is as follows. Component of the cytochrome c oxidase, the last enzyme in the mitochondrial electron transport chain which drives oxidative phosphorylation. The respiratory chain contains 3 multisubunit complexes succinate dehydrogenase (complex II, CII), ubiquinol-cytochrome c oxidoreductase (cytochrome b-c1 complex, complex III, CIII) and cytochrome c oxidase (complex IV, CIV), that cooperate to transfer electrons derived from NADH and succinate to molecular oxygen, creating an electrochemical gradient over the inner membrane that drives transmembrane transport and the ATP synthase. Cytochrome c oxidase is the component of the respiratory chain that catalyzes the reduction of oxygen to water. Electrons originating from reduced cytochrome c in the intermembrane space (IMS) are transferred via the dinuclear copper A center (CU(A)) of subunit 2 and heme A of subunit 1 to the active site in subunit 1, a binuclear center (BNC) formed by heme A3 and copper B (CU(B)). The BNC reduces molecular oxygen to 2 water molecules using 4 electrons from cytochrome c in the IMS and 4 protons from the mitochondrial matrix. This Lasius sp protein is Cytochrome c oxidase subunit 2 (COII).